Reading from the N-terminus, the 984-residue chain is Detocs histidine-protein kinase DtcA (984 aa).

H645 carries the phosphohistidine; by autocatalysis modification.

Autophosphorylated.

The enzyme catalyses ATP + protein L-histidine = ADP + protein N-phospho-L-histidine.. In terms of biological role, sensor-kinase member of the two-component regulatory system Detocs that confers resistance to bacteriophage. When the system (DtcA-DtcB-DtcC) is expressed in a susceptible E.coli (strain MG1655) it confers resistance to bacteriophages T2, T4, T5, T6 and SECphi27. Detocs inhibits T5 infection leading to growth arrest but not complete cell lysis, during SECphi27 infection leads to cell lysis. DtcA (this subunit) probably autophosphorylates upon sensing viral infection, and subsequently transfers the phosphate signal to DtcC which activates it, leading to an antiviral defense; DtcB may scavenge phosphorylation signals from accidental activation of DtcA. The protein is Detocs histidine-protein kinase DtcA of Vibrio alginolyticus.